The sequence spans 150 residues: Avidin-related protein 3 (150 aa).

Residues 1-24 (MVHTTSPLLLLLLLSLALVAPSLS) form the signal peptide. An Avidin-like domain is found at 26 to 147 (RKCSLTGKWT…GYNNFTRQRT (122 aa)). Cys-28 and Cys-105 are joined by a disulfide. 5 residues coordinate biotin: Asn-36, Ser-40, Tyr-57, Thr-59, and Asp-63. N-linked (GlcNAc...) asparagine glycosylation occurs at Asn-93. Biotin contacts are provided by Ser-95, Ser-99, and Asn-140. N-linked (GlcNAc...) asparagine glycosylation is present at Asn-141.

It belongs to the avidin/streptavidin family. In terms of assembly, homotetramer. In terms of processing, glycosylated.

The protein resides in the secreted. In terms of biological role, forms a strong non-covalent specific complex with biotin. This is Avidin-related protein 3 (AVR3) from Gallus gallus (Chicken).